The chain runs to 639 residues: uncharacterized protein (639 aa).

The N-terminal stretch at 1–16 (MLTLYLFTATCCFVCA) is a signal peptide. Disordered regions lie at residues 80 to 128 (RRRA…SDKL) and 432 to 488 (QTAT…TSRT). Polar residues-rich tracts occupy residues 108-122 (TYATTDPTNSPTASP) and 432-446 (QTATASAKAHTQQQP). The segment covering 465–480 (HGDEPHSDGELRRESH) has biased composition (basic and acidic residues).

This is an uncharacterized protein from Human cytomegalovirus (strain Merlin) (HHV-5).